We begin with the raw amino-acid sequence, 641 residues long: Probable potassium transport system protein Kup (641 aa).

Over residues 1-14 (MALDSESSASNRQG) the composition is skewed to polar residues. The tract at residues 1 to 20 (MALDSESSASNRQGSRNEQD) is disordered. 12 helical membrane passes run 29–49 (LCLTALGVVYGDIATSPLYAF), 69–89 (ILSLIFWALIILVSIKYLLII), 120–140 (VLIVLGLFGAALLYGDGMITP), 156–176 (PQLTSYIIPATTVILVLLFMV), 188–208 (FGPIMLVWFVVIALLGLNGII), 236–256 (VLGGVFLALTGAEALYADMGH), 267–287 (FALVLPALLLNYFGQGALLLL), 307–327 (LVGLATLATIIASQAIISGVF), 355–375 (VYVPAANWFMMIAAVWLVLHF), 384–404 (AFGIAVSGTMVITTILAFFVM), 410–430 (WNILTAVAVTVGFLIIDLAFF), and 437–457 (ITDGGWFPLAIAVFIFTLMIT).

The protein belongs to the HAK/KUP transporter (TC 2.A.72) family.

It localises to the cell inner membrane. It carries out the reaction K(+)(in) + H(+)(in) = K(+)(out) + H(+)(out). Functionally, transport of potassium into the cell. Likely operates as a K(+):H(+) symporter. The chain is Probable potassium transport system protein Kup from Nitrosomonas eutropha (strain DSM 101675 / C91 / Nm57).